Consider the following 454-residue polypeptide: N-acetyl-S-(2-succino)cysteine lyase (454 aa).

106-107 (TT) serves as a coordination point for fumarate. His-154 serves as the catalytic Proton donor/acceptor. A fumarate-binding site is contributed by Arg-233. Catalysis depends on Ser-277, which acts as the Proton donor/acceptor. Residues Thr-278 and 283–285 (KRN) each bind fumarate.

Belongs to the lyase 1 family.

It carries out the reaction N-acetyl-S-(2-succino)-L-cysteine = N-acetyl-L-cysteine + fumarate. The protein operates within amino-acid biosynthesis; L-cysteine biosynthesis. Catalyzes the cleavage of N-acetyl-S-(2-succino)cysteine into fumarate and N-acetylcysteine. Is involved in a S-(2-succino)cysteine (2SC) degradation pathway that allows the bacterium to recover cysteine from 2SC and to detoxify 2SC that may be a toxic metabolite. Can also perform the reverse reaction in vitro, and has minor activity against 2SC and other small molecule thiols. In Dickeya dadantii (strain 3937) (Erwinia chrysanthemi (strain 3937)), this protein is N-acetyl-S-(2-succino)cysteine lyase.